Consider the following 224-residue polypeptide: Uracil-DNA glycosylase (224 aa).

Catalysis depends on Asp61, which acts as the Proton acceptor.

The protein belongs to the uracil-DNA glycosylase (UDG) superfamily. UNG family.

It is found in the cytoplasm. The catalysed reaction is Hydrolyzes single-stranded DNA or mismatched double-stranded DNA and polynucleotides, releasing free uracil.. In terms of biological role, excises uracil residues from the DNA which can arise as a result of misincorporation of dUMP residues by DNA polymerase or due to deamination of cytosine. The chain is Uracil-DNA glycosylase from Mannheimia succiniciproducens (strain KCTC 0769BP / MBEL55E).